Here is a 236-residue protein sequence, read N- to C-terminus: Probable glutathione S-transferase GSTU6 (236 aa).

The GST N-terminal domain maps to 5 to 84 (GELKLLGVWS…YIDEVWPGGA (80 aa)). Glutathione contacts are provided by residues serine 15, lysine 42, valine 56, and 68–69 (ES). The 135-residue stretch at 94-228 (DPYERAVARF…KLLEFRQTLL (135 aa)) folds into the GST C-terminal domain.

It belongs to the GST superfamily. Tau family. In terms of tissue distribution, expressed in seedling shoots and roots.

The enzyme catalyses RX + glutathione = an S-substituted glutathione + a halide anion + H(+). Conjugation of reduced glutathione to a wide number of exogenous and endogenous hydrophobic electrophiles. This chain is Probable glutathione S-transferase GSTU6 (GSTU6), found in Oryza sativa subsp. japonica (Rice).